Consider the following 353-residue polypeptide: S-adenosylmethionine:tRNA ribosyltransferase-isomerase (353 aa).

It belongs to the QueA family. As to quaternary structure, monomer.

The protein localises to the cytoplasm. It catalyses the reaction 7-aminomethyl-7-carbaguanosine(34) in tRNA + S-adenosyl-L-methionine = epoxyqueuosine(34) in tRNA + adenine + L-methionine + 2 H(+). The protein operates within tRNA modification; tRNA-queuosine biosynthesis. Transfers and isomerizes the ribose moiety from AdoMet to the 7-aminomethyl group of 7-deazaguanine (preQ1-tRNA) to give epoxyqueuosine (oQ-tRNA). This is S-adenosylmethionine:tRNA ribosyltransferase-isomerase from Burkholderia vietnamiensis (strain G4 / LMG 22486) (Burkholderia cepacia (strain R1808)).